Here is a 338-residue protein sequence, read N- to C-terminus: Phosphatidylglycerol--prolipoprotein diacylglyceryl transferase (338 aa).

4 consecutive transmembrane segments (helical) span residues Trp-24–Val-44, Leu-67–Tyr-87, Gly-115–Trp-135, and Phe-141–Gly-161. Arg-162 lines the a 1,2-diacyl-sn-glycero-3-phospho-(1'-sn-glycerol) pocket. Transmembrane regions (helical) follow at residues Pro-224 to Leu-244, Gly-252 to Phe-272, and Gly-304 to Leu-324.

This sequence belongs to the Lgt family.

The protein localises to the cell inner membrane. The enzyme catalyses L-cysteinyl-[prolipoprotein] + a 1,2-diacyl-sn-glycero-3-phospho-(1'-sn-glycerol) = an S-1,2-diacyl-sn-glyceryl-L-cysteinyl-[prolipoprotein] + sn-glycerol 1-phosphate + H(+). The protein operates within protein modification; lipoprotein biosynthesis (diacylglyceryl transfer). Catalyzes the transfer of the diacylglyceryl group from phosphatidylglycerol to the sulfhydryl group of the N-terminal cysteine of a prolipoprotein, the first step in the formation of mature lipoproteins. This is Phosphatidylglycerol--prolipoprotein diacylglyceryl transferase from Treponema denticola (strain ATCC 35405 / DSM 14222 / CIP 103919 / JCM 8153 / KCTC 15104).